A 247-amino-acid chain; its full sequence is Chymase (247 aa).

Positions 1–17 (MCLLSLPLLLFLQYTRA) are cleaved as a signal peptide. The propeptide at 18–21 (KAGE) is activation peptide. Positions 22-245 (VIGGTECKPH…YRPWINKILK (224 aa)) constitute a Peptidase S1 domain. Cys-51 and Cys-67 are disulfide-bonded. The Charge relay system role is filled by His-66. An N-linked (GlcNAc...) asparagine glycan is attached at Asn-103. Asp-110 functions as the Charge relay system in the catalytic mechanism. The N-linked (GlcNAc...) asparagine glycan is linked to Asn-121. 2 cysteine pairs are disulfide-bonded: Cys-144–Cys-209 and Cys-175–Cys-188. Ser-203 functions as the Charge relay system in the catalytic mechanism.

Belongs to the peptidase S1 family. Granzyme subfamily.

It is found in the secreted. The protein localises to the cytoplasmic granule. It catalyses the reaction Preferential cleavage: Phe-|-Xaa &gt; Tyr-|-Xaa &gt; Trp-|-Xaa &gt; Leu-|-Xaa.. Functionally, major secreted protease of mast cells with suspected roles in vasoactive peptide generation, extracellular matrix degradation, and regulation of gland secretion. In Cavia porcellus (Guinea pig), this protein is Chymase.